Here is a 316-residue protein sequence, read N- to C-terminus: Olfactory receptor 5AP2 (316 aa).

Residues 1 to 34 (MRLMKEVRGRNQTEVTEFLLLGLSDNPDLQGVLF) are Extracellular-facing. A glycan (N-linked (GlcNAc...) asparagine) is linked at Asn-11. Residues 35-55 (ALFLLIYMANMVGNLGMIVLI) traverse the membrane as a helical segment. Lys-56 is a topological domain (cytoplasmic). Residues 57 to 77 (IDLCLHTPMYFFLSSLSFVDA) traverse the membrane as a helical segment. Over 78-104 (SYSSSVTPKMLVNLMAENKAISFHGCA) the chain is Extracellular. Cys-103 and Cys-195 are joined by a disulfide. A helical transmembrane segment spans residues 105–125 (AQFYFFGSFLGTECFLLAMMA). Topologically, residues 126-135 (YDRYAAIWNP) are cytoplasmic. The helical transmembrane segment at 136–156 (LLYPVLVSGRICFLLIATSFL) threads the bilayer. At 157–210 (AGCGNAAIHTGMTFRLSFCGSNRINHFYCDTPPLLKLSCSDTHFNGIVIMAFSS) the chain is on the extracellular side. The chain crosses the membrane as a helical span at residues 211–231 (FIVISCVMIVLISYLCIFIAV). Over 232-245 (LKMPSLEGRHKAFS) the chain is Cytoplasmic. Residues 246-266 (TCASYLMAVTIFFGTILFMYL) form a helical membrane-spanning segment. At 267 to 278 (RPTSSYSMEQDK) the chain is on the extracellular side. Residues 279–299 (VVSVFYTVIIPVLNPLIYSLK) traverse the membrane as a helical segment. The Cytoplasmic portion of the chain corresponds to 300–316 (NKDVKKALKKILWKHIL).

It belongs to the G-protein coupled receptor 1 family.

Its subcellular location is the cell membrane. Functionally, odorant receptor. The protein is Olfactory receptor 5AP2 of Homo sapiens (Human).